Reading from the N-terminus, the 167-residue chain is SsrA-binding protein (167 aa).

Positions 139–158 (QNHDKRDAAKDRDWQRDKQR) are enriched in basic and acidic residues. Positions 139 to 167 (QNHDKRDAAKDRDWQRDKQRVMRRHNRDA) are disordered.

Belongs to the SmpB family.

Its subcellular location is the cytoplasm. In terms of biological role, required for rescue of stalled ribosomes mediated by trans-translation. Binds to transfer-messenger RNA (tmRNA), required for stable association of tmRNA with ribosomes. tmRNA and SmpB together mimic tRNA shape, replacing the anticodon stem-loop with SmpB. tmRNA is encoded by the ssrA gene; the 2 termini fold to resemble tRNA(Ala) and it encodes a 'tag peptide', a short internal open reading frame. During trans-translation Ala-aminoacylated tmRNA acts like a tRNA, entering the A-site of stalled ribosomes, displacing the stalled mRNA. The ribosome then switches to translate the ORF on the tmRNA; the nascent peptide is terminated with the 'tag peptide' encoded by the tmRNA and targeted for degradation. The ribosome is freed to recommence translation, which seems to be the essential function of trans-translation. This is SsrA-binding protein from Xanthomonas euvesicatoria pv. vesicatoria (strain 85-10) (Xanthomonas campestris pv. vesicatoria).